The chain runs to 104 residues: Flagellar hook-basal body complex protein FliE (104 aa).

The protein belongs to the FliE family.

Its subcellular location is the bacterial flagellum basal body. This is Flagellar hook-basal body complex protein FliE from Escherichia coli (strain 55989 / EAEC).